The chain runs to 110 residues: UPF0060 membrane protein ASA_2267 (110 aa).

4 helical membrane-spanning segments follow: residues 7-27 (IGLF…PYLW), 33-53 (SVWL…LLSL), 63-83 (AAYG…VDGI), and 87-107 (LWDL…MFAP).

It belongs to the UPF0060 family.

It localises to the cell inner membrane. In Aeromonas salmonicida (strain A449), this protein is UPF0060 membrane protein ASA_2267.